Reading from the N-terminus, the 1106-residue chain is Protein kinase C (1106 aa).

One can recognise an REM-1 1 domain in the interval 1 to 67 (MDGDDLIASV…MRELQLRQMK (67 aa)). Residues 65–138 (QMKQEGASPT…PRPFAPVPKA (74 aa)) are disordered. Residues 79-93 (PPNPDGSAPVPPPKD) are compositionally biased toward pro residues. An REM-1 2 domain is found at 149–226 (KYDTPYLGPK…LKRYEDLHVD (78 aa)). One can recognise a C2 domain in the interval 232–350 (APDDESLSTP…MRRKKIESEF (119 aa)). A compositionally biased stretch (basic and acidic residues) spans 361-370 (MEHGAAHGRQ). The interval 361–400 (MEHGAAHGRQDAGGAPGSSNRPPSGGHSGGPGQGYAGGAP) is disordered. The segment covering 386 to 400 (GHSGGPGQGYAGGAP) has biased composition (gly residues). 2 Phorbol-ester/DAG-type zinc fingers span residues 460-508 (GHKF…VTKC) and 528-578 (PHRF…PDFC). 2 stretches are compositionally biased toward polar residues: residues 600 to 609 (KSASVSSGLS) and 658 to 668 (YIPPQSPTAAQ). 2 disordered regions span residues 600 to 625 (KSAS…PQDN) and 658 to 719 (YIPP…HAHY). Over residues 683–693 (AAAAAAAAAAA) the composition is skewed to low complexity. Residues 781 to 1040 (FNFLAVLGKG…AQEVMSHAFF (260 aa)) form the Protein kinase domain. ATP contacts are provided by residues 787 to 795 (LGKGNFGKV) and lysine 810. Aspartate 906 functions as the Proton acceptor in the catalytic mechanism. One can recognise an AGC-kinase C-terminal domain in the interval 1041–1106 (RNINWDDIYH…RGFSYTADFA (66 aa)). A Phosphothreonine modification is found at threonine 1082. Serine 1100 carries the phosphoserine modification. Residue tyrosine 1101 is modified to Phosphotyrosine.

It belongs to the protein kinase superfamily. AGC Ser/Thr protein kinase family. PKC subfamily. Interacts with hsp90.

The catalysed reaction is L-seryl-[protein] + ATP = O-phospho-L-seryl-[protein] + ADP + H(+). The enzyme catalyses L-threonyl-[protein] + ATP = O-phospho-L-threonyl-[protein] + ADP + H(+). In terms of biological role, protein kinase C; part of cell wall integrity (CWI) signaling pathway composed of pkcA, the bck1-mkk2-mpka MAPK cascade and the downstream rlmA transcription regulator. The CWI signaling pathway regulates cell wall integrity and pyomelanin formation. CWI also controls oxidative stress response, gliotoxin production, iron adaptation and asexual development. Finally, CWI is constitutively required for A.fumigatus to cope with the temperature increase found in the mammalian lung environment, during infection. Modulates the expression of fumiquinazoline cluster during conidiogenesis. The protein is Protein kinase C of Aspergillus fumigatus (strain ATCC MYA-4609 / CBS 101355 / FGSC A1100 / Af293) (Neosartorya fumigata).